The sequence spans 214 residues: MTPQPSGAPTVQVTRETERSFPRASEDEVTCPTSAPPSPTRTRGNCAEAEEGGCRGAPRKLRARRGGRSRPKSELALSKQRRSRRKKANDRERNRMHNLNSALDALRGVLPTFPDDAKLTKIETLRFAHNYIWALTQTLRIADHSLYALEPPAPHCGELGSPGGSPGDWGSLYSPVSQAGSLSPAASLEERPGLLGATFSACLSPGSLAFSDFL.

Positions 1-14 are enriched in polar residues; sequence MTPQPSGAPTVQVT. The disordered stretch occupies residues 1 to 98; that stretch reads MTPQPSGAPT…NDRERNRMHN (98 aa). Over residues 15-26 the composition is skewed to basic and acidic residues; it reads RETERSFPRASE. 2 stretches are compositionally biased toward basic residues: residues 57–70 and 79–88; these read APRK…GRSR and KQRRSRRKKA. One can recognise a bHLH domain in the interval 83-135; that stretch reads SRRKKANDRERNRMHNLNSALDALRGVLPTFPDDAKLTKIETLRFAHNYIWAL.

As to quaternary structure, efficient DNA binding requires dimerization with another bHLH protein. Interacts with ATOH8.

It is found in the nucleus. Its function is as follows. Acts as a transcriptional regulator. Together with NKX2-2, initiates transcriptional activation of NEUROD1. Involved in neurogenesis. Also required for the specification of a common precursor of the 4 pancreatic endocrine cell types. The sequence is that of Neurogenin-3 (NEUROG3) from Homo sapiens (Human).